We begin with the raw amino-acid sequence, 493 residues long: Glutamyl-tRNA(Gln) amidotransferase subunit A (493 aa).

Active-site charge relay system residues include K78 and S158. The active-site Acyl-ester intermediate is S182.

Belongs to the amidase family. GatA subfamily. As to quaternary structure, heterotrimer of A, B and C subunits.

The enzyme catalyses L-glutamyl-tRNA(Gln) + L-glutamine + ATP + H2O = L-glutaminyl-tRNA(Gln) + L-glutamate + ADP + phosphate + H(+). Functionally, allows the formation of correctly charged Gln-tRNA(Gln) through the transamidation of misacylated Glu-tRNA(Gln) in organisms which lack glutaminyl-tRNA synthetase. The reaction takes place in the presence of glutamine and ATP through an activated gamma-phospho-Glu-tRNA(Gln). The protein is Glutamyl-tRNA(Gln) amidotransferase subunit A of Azorhizobium caulinodans (strain ATCC 43989 / DSM 5975 / JCM 20966 / LMG 6465 / NBRC 14845 / NCIMB 13405 / ORS 571).